We begin with the raw amino-acid sequence, 372 residues long: Enoyl-[acyl-carrier-protein] reductase, mitochondrial (372 aa).

Residues 1-18 constitute a mitochondrion transit peptide; it reads MSFFKTAVRRFSSTSITR. Tyrosine 72 serves as the catalytic Proton donor. Residues asparagine 157, 183–186, 206–208, 279–282, 304–306, and lysine 365 each bind NADP(+); these read NSMV, RNR, FGGM, and FWV.

The protein belongs to the zinc-containing alcohol dehydrogenase family. Quinone oxidoreductase subfamily. As to quaternary structure, homodimer.

Its subcellular location is the mitochondrion matrix. The catalysed reaction is a 2,3-saturated acyl-[ACP] + NADP(+) = a (2E)-enoyl-[ACP] + NADPH + H(+). Catalyzes the NADPH-dependent reduction of trans-2-enoyl thioesters in mitochondrial fatty acid synthesis (fatty acid synthesis type II). Fatty acid chain elongation in mitochondria uses acyl carrier protein (ACP) as an acyl group carrier, but the enzyme accepts both ACP and CoA thioesters as substrates in vitro. Required for respiration and the maintenance of the mitochondrial compartment. This Schizosaccharomyces pombe (strain 972 / ATCC 24843) (Fission yeast) protein is Enoyl-[acyl-carrier-protein] reductase, mitochondrial (etr1).